A 164-amino-acid polypeptide reads, in one-letter code: NADH-quinone oxidoreductase subunit C (164 aa).

The protein belongs to the complex I 30 kDa subunit family. As to quaternary structure, NDH-1 is composed of 14 different subunits. Subunits NuoB, C, D, E, F, and G constitute the peripheral sector of the complex.

It is found in the cell inner membrane. It carries out the reaction a quinone + NADH + 5 H(+)(in) = a quinol + NAD(+) + 4 H(+)(out). In terms of biological role, NDH-1 shuttles electrons from NADH, via FMN and iron-sulfur (Fe-S) centers, to quinones in the respiratory chain. The immediate electron acceptor for the enzyme in this species is believed to be ubiquinone. Couples the redox reaction to proton translocation (for every two electrons transferred, four hydrogen ions are translocated across the cytoplasmic membrane), and thus conserves the redox energy in a proton gradient. This is NADH-quinone oxidoreductase subunit C from Geotalea uraniireducens (strain Rf4) (Geobacter uraniireducens).